Here is a 909-residue protein sequence, read N- to C-terminus: SCY1-like protein 2 B (909 aa).

One can recognise a Protein kinase domain in the interval Tyr39–Phe343. HEAT repeat units follow at residues Ser311–Arg348, Arg350–Ser382, Arg383–Val401, Leu402–Gly439, Val465–Gln502, Val499–Lys537, and Phe578–Glu617. Disordered stretches follow at residues Asn624–Thr772 and Ser804–Leu909. Polar residues-rich tracts occupy residues Asn638–Ile648, Pro678–Thr712, Arg724–Ala747, Ser804–Leu828, and Lys835–Lys852.

This sequence belongs to the protein kinase superfamily. Interacts with VTI11, VTI12 and CHC1. As to expression, expressed in roots, seedlings, leaves, stems, flowers, and, at low levels, in siliques.

It is found in the golgi apparatus membrane. The protein localises to the golgi apparatus. Its subcellular location is the trans-Golgi network membrane. It localises to the prevacuolar compartment membrane. In terms of biological role, probably inactive kinase. Component of the AP2-containing clathrin coat that regulates clathrin-dependent trafficking at plasma membrane, TGN and endosomal system. Together with SCYL2B, required for cell growth, plant growth and development. Essential for polarized root hair development probably by mediating the root hair tip localization of cellulose synthase-like D3 (CSLD3). In Arabidopsis thaliana (Mouse-ear cress), this protein is SCY1-like protein 2 B.